Here is a 411-residue protein sequence, read N- to C-terminus: Serine hydroxymethyltransferase (411 aa).

(6S)-5,6,7,8-tetrahydrofolate-binding positions include leucine 117 and 121 to 123 (GHL). An N6-(pyridoxal phosphate)lysine modification is found at lysine 226. Residues glutamate 241 and 349–351 (SPF) contribute to the (6S)-5,6,7,8-tetrahydrofolate site.

It belongs to the SHMT family. In terms of assembly, homodimer. Pyridoxal 5'-phosphate is required as a cofactor.

The protein resides in the cytoplasm. The enzyme catalyses (6R)-5,10-methylene-5,6,7,8-tetrahydrofolate + glycine + H2O = (6S)-5,6,7,8-tetrahydrofolate + L-serine. It participates in one-carbon metabolism; tetrahydrofolate interconversion. The protein operates within amino-acid biosynthesis; glycine biosynthesis; glycine from L-serine: step 1/1. In terms of biological role, catalyzes the reversible interconversion of serine and glycine with tetrahydrofolate (THF) serving as the one-carbon carrier. This reaction serves as the major source of one-carbon groups required for the biosynthesis of purines, thymidylate, methionine, and other important biomolecules. Also exhibits THF-independent aldolase activity toward beta-hydroxyamino acids, producing glycine and aldehydes, via a retro-aldol mechanism. The sequence is that of Serine hydroxymethyltransferase from Macrococcus caseolyticus (strain JCSC5402) (Macrococcoides caseolyticum).